A 365-amino-acid polypeptide reads, in one-letter code: tRNA/tmRNA (uracil-C(5))-methyltransferase (365 aa).

S-adenosyl-L-methionine-binding residues include Gln-189, Tyr-217, Asn-222, Glu-238, and Asp-298. Cys-323 (nucleophile) is an active-site residue. The active-site Proton acceptor is the Glu-357.

It belongs to the class I-like SAM-binding methyltransferase superfamily. RNA M5U methyltransferase family. TrmA subfamily.

The enzyme catalyses uridine(54) in tRNA + S-adenosyl-L-methionine = 5-methyluridine(54) in tRNA + S-adenosyl-L-homocysteine + H(+). The catalysed reaction is uridine(341) in tmRNA + S-adenosyl-L-methionine = 5-methyluridine(341) in tmRNA + S-adenosyl-L-homocysteine + H(+). Dual-specificity methyltransferase that catalyzes the formation of 5-methyluridine at position 54 (m5U54) in all tRNAs, and that of position 341 (m5U341) in tmRNA (transfer-mRNA). This Shewanella sp. (strain MR-4) protein is tRNA/tmRNA (uracil-C(5))-methyltransferase.